The chain runs to 284 residues: D-tagatose-1,6-bisphosphate aldolase subunit GatY (284 aa).

Asp82 (proton donor) is an active-site residue. 2 residues coordinate Zn(2+): His83 and His180. Residue Gly181 participates in dihydroxyacetone phosphate binding. Zn(2+) is bound at residue His208. Dihydroxyacetone phosphate contacts are provided by residues 209 to 211 (GAS) and 230 to 233 (NVAT).

This sequence belongs to the class II fructose-bisphosphate aldolase family. TagBP aldolase GatY subfamily. As to quaternary structure, forms a complex with GatZ. Requires Zn(2+) as cofactor.

It carries out the reaction D-tagatofuranose 1,6-bisphosphate = D-glyceraldehyde 3-phosphate + dihydroxyacetone phosphate. It functions in the pathway carbohydrate metabolism; D-tagatose 6-phosphate degradation; D-glyceraldehyde 3-phosphate and glycerone phosphate from D-tagatose 6-phosphate: step 2/2. Catalytic subunit of the tagatose-1,6-bisphosphate aldolase GatYZ, which catalyzes the reversible aldol condensation of dihydroxyacetone phosphate (DHAP or glycerone-phosphate) with glyceraldehyde 3-phosphate (G3P) to produce tagatose 1,6-bisphosphate (TBP). Requires GatZ subunit for full activity and stability. Is involved in the catabolism of galactitol. This Salmonella paratyphi B (strain ATCC BAA-1250 / SPB7) protein is D-tagatose-1,6-bisphosphate aldolase subunit GatY.